Reading from the N-terminus, the 745-residue chain is Phosphoribosylformylglycinamidine synthase subunit PurL (745 aa).

The active site involves H50. Residues Y53 and K92 each coordinate ATP. E94 serves as a coordination point for Mg(2+). Substrate is bound by residues 95–98 and R117; that span reads SHNH. H96 (proton acceptor) is an active-site residue. Position 118 (D118) interacts with Mg(2+). A substrate-binding site is contributed by Q241. Position 269 (D269) interacts with Mg(2+). A substrate-binding site is contributed by 313–315; it reads ESQ. D495 and G532 together coordinate ATP. Residue N533 participates in Mg(2+) binding. S535 lines the substrate pocket.

The protein belongs to the FGAMS family. As to quaternary structure, monomer. Part of the FGAM synthase complex composed of 1 PurL, 1 PurQ and 2 PurS subunits.

It localises to the cytoplasm. The enzyme catalyses N(2)-formyl-N(1)-(5-phospho-beta-D-ribosyl)glycinamide + L-glutamine + ATP + H2O = 2-formamido-N(1)-(5-O-phospho-beta-D-ribosyl)acetamidine + L-glutamate + ADP + phosphate + H(+). It participates in purine metabolism; IMP biosynthesis via de novo pathway; 5-amino-1-(5-phospho-D-ribosyl)imidazole from N(2)-formyl-N(1)-(5-phospho-D-ribosyl)glycinamide: step 1/2. In terms of biological role, part of the phosphoribosylformylglycinamidine synthase complex involved in the purines biosynthetic pathway. Catalyzes the ATP-dependent conversion of formylglycinamide ribonucleotide (FGAR) and glutamine to yield formylglycinamidine ribonucleotide (FGAM) and glutamate. The FGAM synthase complex is composed of three subunits. PurQ produces an ammonia molecule by converting glutamine to glutamate. PurL transfers the ammonia molecule to FGAR to form FGAM in an ATP-dependent manner. PurS interacts with PurQ and PurL and is thought to assist in the transfer of the ammonia molecule from PurQ to PurL. This is Phosphoribosylformylglycinamidine synthase subunit PurL from Allorhizobium ampelinum (strain ATCC BAA-846 / DSM 112012 / S4) (Agrobacterium vitis (strain S4)).